The chain runs to 1086 residues: MTNTKYYPDVSANVDFAAIEQEILKFWQNNNIFQKSIDYRNGESEFIFYDGPPFANGLPHYGHLLTGFIKDVYARYKTIKGKKVERRFGWDCHGLPAEMQSEKELGISGRIAITNFGIEKFNNHCRASVMQYASEWEQYVTRQARWVAFKNAYKTMDKNFMESVLWAFKELYNKDLLYESMRVMPYSWACETPLSNFETRLDNAYRERTDKAITVSFVLNEVTLINGIISQKSDMKEGDNFKEYRILAWTTTPWTLPANLALAVGSDIDYAFVDKNEVCYIIAASSVAKYAKELGLSGKENFEIIKGLKLQGLSYKPLFNYFENHPNSFKIFASDFVVEGDGTGIVHMAPGFGEDDQILCESKGIELVCPVDNSGKFTKEIPDLEGVQVFDANDKIIIKLKEQGNWIKTEQYIHNYPHCWRTDTPLIYKAVPSWYVRVTKFKDRMVELNQQINWIPHNVKDNLFGKWLENARDWSISRNRFWGTPLPVWKSDDPKYPRIDVYGSIEEIEKDFGVKINDLHRPFIDELTRTNPDDPTGKSTMRRIDDVFDCWFESGSMPYGQVHYPFENKKWFVEHFPADFIVEYSSQTRGWFYTLMVLSTALFDRPPFLNCICHGVILDATGQKLSKRLNNYADPLELFDKYGSDALRVTMLSSNVVKGQELLIDKDGKMVFDTLRLFIKPIWNAYHFFTIYANADSLKGTLNFASQNVLDVYILSKLKIAVNKIEESLDNFDTQTAYHAVSEFFEVLNNWYIRRSRARFWKNEKDTDKQNAYNTLYSCLKIMTIAMSALIPMISETIYQGLHNTAITQLNCLLSEGKHIVQNPMSDTQDYNTSVHLCNYPTLSDFEINYELVSTMDNVLDICSNSLFIRSTENIRVRQPLACITIISKHNNNLKDFEDLIKDEINVKTVIYRDDLENYARKKLSLNFAILGKRLPHKMKAIIDAAKKGEWEATTLGLAICGEILNSDEYTLILEPYSHIKGTANFDNNSSLLILNLELTSELIEEGYARDIVRFIQYARKEADFSITDRILIEIISEFDLSKIIDHYGDFIKEQTLGEFAKNFTPDYVSKVALENNQIQLKVKRL.

A 'HIGH' region motif is present at residues 53 to 63 (PFANGLPHYGH). The 'KMSKS' region motif lies at 624-628 (KLSKR). ATP is bound at residue Lys-627.

This sequence belongs to the class-I aminoacyl-tRNA synthetase family. IleS type 2 subfamily. In terms of assembly, monomer. Requires Zn(2+) as cofactor.

The protein localises to the cytoplasm. It catalyses the reaction tRNA(Ile) + L-isoleucine + ATP = L-isoleucyl-tRNA(Ile) + AMP + diphosphate. In terms of biological role, catalyzes the attachment of isoleucine to tRNA(Ile). As IleRS can inadvertently accommodate and process structurally similar amino acids such as valine, to avoid such errors it has two additional distinct tRNA(Ile)-dependent editing activities. One activity is designated as 'pretransfer' editing and involves the hydrolysis of activated Val-AMP. The other activity is designated 'posttransfer' editing and involves deacylation of mischarged Val-tRNA(Ile). The chain is Isoleucine--tRNA ligase from Rickettsia prowazekii (strain Madrid E).